Reading from the N-terminus, the 67-residue chain is ATP synthase protein 8 (67 aa).

The chain crosses the membrane as a helical span at residues 8–24; sequence TWFITILATILTLFIIM. Lysine 54 bears the N6-acetyllysine; alternate mark. Lysine 54 carries the post-translational modification N6-succinyllysine; alternate. Lysine 57 bears the N6-acetyllysine mark.

Belongs to the ATPase protein 8 family. F-type ATPases have 2 components, CF(1) - the catalytic core - and CF(0) - the membrane proton channel. Component of an ATP synthase complex composed of ATP5PB, ATP5MC1, ATP5F1E, ATP5PD, ATP5ME, ATP5PF, ATP5MF, MT-ATP6, MT-ATP8, ATP5F1A, ATP5F1B, ATP5F1D, ATP5F1C, ATP5PO, ATP5MG, ATP5MK and ATP5MJ. Interacts with PRICKLE3.

The protein resides in the mitochondrion membrane. Mitochondrial membrane ATP synthase (F(1)F(0) ATP synthase or Complex V) produces ATP from ADP in the presence of a proton gradient across the membrane which is generated by electron transport complexes of the respiratory chain. F-type ATPases consist of two structural domains, F(1) - containing the extramembraneous catalytic core and F(0) - containing the membrane proton channel, linked together by a central stalk and a peripheral stalk. During catalysis, ATP synthesis in the catalytic domain of F(1) is coupled via a rotary mechanism of the central stalk subunits to proton translocation. Part of the complex F(0) domain. Minor subunit located with subunit a in the membrane. The chain is ATP synthase protein 8 (MT-ATP8) from Artibeus jamaicensis (Jamaican fruit-eating bat).